The sequence spans 309 residues: Malate dehydrogenase (309 aa).

Residues 9 to 14 and Asp33 contribute to the NAD(+) site; that span reads GAGFVG. Substrate-binding residues include Arg82 and Arg88. NAD(+)-binding positions include Asn95 and 118 to 120; that span reads VNN. Residues Asn120 and Arg151 each contribute to the substrate site. His175 functions as the Proton acceptor in the catalytic mechanism.

This sequence belongs to the LDH/MDH superfamily. MDH type 3 family.

It carries out the reaction (S)-malate + NAD(+) = oxaloacetate + NADH + H(+). In terms of biological role, catalyzes the reversible oxidation of malate to oxaloacetate. In Chloroflexus aggregans (strain MD-66 / DSM 9485), this protein is Malate dehydrogenase.